A 232-amino-acid polypeptide reads, in one-letter code: Large ribosomal subunit protein uL1 (232 aa).

This sequence belongs to the universal ribosomal protein uL1 family. In terms of assembly, part of the 50S ribosomal subunit.

Its function is as follows. Binds directly to 23S rRNA. The L1 stalk is quite mobile in the ribosome, and is involved in E site tRNA release. Protein L1 is also a translational repressor protein, it controls the translation of the L11 operon by binding to its mRNA. This Bordetella petrii (strain ATCC BAA-461 / DSM 12804 / CCUG 43448) protein is Large ribosomal subunit protein uL1.